The primary structure comprises 268 residues: Tryptophan synthase alpha chain (268 aa).

Catalysis depends on proton acceptor residues Glu49 and Asp60.

It belongs to the TrpA family. In terms of assembly, tetramer of two alpha and two beta chains.

It catalyses the reaction (1S,2R)-1-C-(indol-3-yl)glycerol 3-phosphate + L-serine = D-glyceraldehyde 3-phosphate + L-tryptophan + H2O. It participates in amino-acid biosynthesis; L-tryptophan biosynthesis; L-tryptophan from chorismate: step 5/5. Functionally, the alpha subunit is responsible for the aldol cleavage of indoleglycerol phosphate to indole and glyceraldehyde 3-phosphate. The sequence is that of Tryptophan synthase alpha chain from Vibrio metschnikovii.